Consider the following 556-residue polypeptide: Formate--tetrahydrofolate ligase (556 aa).

65-72 (TPAGEGKS) serves as a coordination point for ATP.

The protein belongs to the formate--tetrahydrofolate ligase family.

It carries out the reaction (6S)-5,6,7,8-tetrahydrofolate + formate + ATP = (6R)-10-formyltetrahydrofolate + ADP + phosphate. Its pathway is one-carbon metabolism; tetrahydrofolate interconversion. This chain is Formate--tetrahydrofolate ligase, found in Streptococcus pneumoniae (strain Hungary19A-6).